We begin with the raw amino-acid sequence, 328 residues long: Ribosomal protein L11 methyltransferase (328 aa).

The S-adenosyl-L-methionine site is built by Thr-153, Gly-174, Asp-196, and Asn-263.

This sequence belongs to the methyltransferase superfamily. PrmA family.

The protein resides in the cytoplasm. The enzyme catalyses L-lysyl-[protein] + 3 S-adenosyl-L-methionine = N(6),N(6),N(6)-trimethyl-L-lysyl-[protein] + 3 S-adenosyl-L-homocysteine + 3 H(+). Functionally, methylates ribosomal protein L11. In Chloroflexus aurantiacus (strain ATCC 29366 / DSM 635 / J-10-fl), this protein is Ribosomal protein L11 methyltransferase.